Consider the following 238-residue polypeptide: Uridylate kinase (238 aa).

12–15 (KLSG) serves as a coordination point for ATP. Residue Gly-54 participates in UMP binding. The ATP site is built by Gly-55 and Arg-59. UMP contacts are provided by residues Asp-74 and 135–142 (TGNPYFTT). 4 residues coordinate ATP: Thr-162, Asn-163, Tyr-168, and Asp-171.

It belongs to the UMP kinase family. As to quaternary structure, homohexamer.

The protein resides in the cytoplasm. The enzyme catalyses UMP + ATP = UDP + ADP. It participates in pyrimidine metabolism; CTP biosynthesis via de novo pathway; UDP from UMP (UMPK route): step 1/1. Inhibited by UTP. Functionally, catalyzes the reversible phosphorylation of UMP to UDP. This Nitrobacter winogradskyi (strain ATCC 25391 / DSM 10237 / CIP 104748 / NCIMB 11846 / Nb-255) protein is Uridylate kinase.